The chain runs to 948 residues: Isoleucine--tRNA ligase (948 aa).

Residues 58-68 carry the 'HIGH' region motif; the sequence is PYANGSIHIGH. Glu572 contributes to the L-isoleucyl-5'-AMP binding site. A 'KMSKS' region motif is present at residues 613–617; that stretch reads KMSKS. An ATP-binding site is contributed by Lys616. Zn(2+) is bound by residues Cys911, Cys914, Cys931, and Cys934.

This sequence belongs to the class-I aminoacyl-tRNA synthetase family. IleS type 1 subfamily. As to quaternary structure, monomer. Requires Zn(2+) as cofactor.

Its subcellular location is the cytoplasm. The enzyme catalyses tRNA(Ile) + L-isoleucine + ATP = L-isoleucyl-tRNA(Ile) + AMP + diphosphate. Catalyzes the attachment of isoleucine to tRNA(Ile). As IleRS can inadvertently accommodate and process structurally similar amino acids such as valine, to avoid such errors it has two additional distinct tRNA(Ile)-dependent editing activities. One activity is designated as 'pretransfer' editing and involves the hydrolysis of activated Val-AMP. The other activity is designated 'posttransfer' editing and involves deacylation of mischarged Val-tRNA(Ile). The polypeptide is Isoleucine--tRNA ligase (Edwardsiella ictaluri (strain 93-146)).